The primary structure comprises 316 residues: Beta-agarase (316 aa).

A signal peptide spans 1 to 18; it reads MKRKLFTICLASLQFACA. The GH16 domain maps to 27–315; sequence YEWDIYPVPA…WIRVYTLVPE (289 aa). Substrate is bound by residues tryptophan 78, 87–97, and 101–103; these read QRDHVSVSDGF and RAS. The Nucleophile role is filled by glutamate 167. Glutamate 172 functions as the Proton donor in the catalytic mechanism. Position 197 (arginine 197) interacts with substrate.

Belongs to the glycosyl hydrolase 16 family.

The catalysed reaction is Hydrolysis of (1-&gt;4)-beta-D-galactosidic linkages in agarose, giving the tetramer as the predominant product.. In terms of biological role, cleaves the beta-1,4-linkages between beta-D-galactose and alpha-L-3,6-anhydro-galactose residues in agarose. Cleaves agarose in a random manner with retention of the anomeric-bond configuration, producing beta-anomers that give rise progressively to alpha-anomers when mutarotation takes place. The protein is Beta-agarase of Phocaeicola plebeius (strain DSM 17135 / JCM 12973 / CCUG 54634 / M2) (Bacteroides plebeius).